A 539-amino-acid chain; its full sequence is Carboxypeptidase Y homolog A (539 aa).

The first 17 residues, 1-17, serve as a signal peptide directing secretion; the sequence is MKALTATLLVGTALAAV. The propeptide occupies 18-122; the sequence is PPQQPIQVPT…KLEKYDLRVK (105 aa). 5 disulfide bridges follow: C176–C416, C310–C324, C334–C357, C341–C350, and C379–C386. The N-linked (GlcNAc...) asparagine glycan is linked to N207. S263 is an active-site residue. D455 is an active-site residue. Residue N506 is glycosylated (N-linked (GlcNAc...) asparagine). Residue H517 is part of the active site.

The protein belongs to the peptidase S10 family.

It localises to the vacuole. The enzyme catalyses Release of a C-terminal amino acid with broad specificity.. Functionally, vacuolar carboxypeptidase involved in degradation of small peptides. Digests preferentially peptides containing an aliphatic or hydrophobic residue in P1' position, as well as methionine, leucine or phenylalanine in P1 position of ester substrate. This Coccidioides posadasii (strain C735) (Valley fever fungus) protein is Carboxypeptidase Y homolog A (cpyA).